The chain runs to 302 residues: Sulfate adenylyltransferase subunit 2 (302 aa).

It belongs to the PAPS reductase family. CysD subfamily. In terms of assembly, heterodimer composed of CysD, the smaller subunit, and CysN.

The enzyme catalyses sulfate + ATP + H(+) = adenosine 5'-phosphosulfate + diphosphate. Its pathway is sulfur metabolism; hydrogen sulfide biosynthesis; sulfite from sulfate: step 1/3. In terms of biological role, with CysN forms the ATP sulfurylase (ATPS) that catalyzes the adenylation of sulfate producing adenosine 5'-phosphosulfate (APS) and diphosphate, the first enzymatic step in sulfur assimilation pathway. APS synthesis involves the formation of a high-energy phosphoric-sulfuric acid anhydride bond driven by GTP hydrolysis by CysN coupled to ATP hydrolysis by CysD. This is Sulfate adenylyltransferase subunit 2 from Sodalis glossinidius (strain morsitans).